The primary structure comprises 341 residues: UDP-3-O-acylglucosamine N-acyltransferase (341 aa).

H241 acts as the Proton acceptor in catalysis.

The protein belongs to the transferase hexapeptide repeat family. LpxD subfamily. In terms of assembly, homotrimer.

It carries out the reaction a UDP-3-O-[(3R)-3-hydroxyacyl]-alpha-D-glucosamine + a (3R)-hydroxyacyl-[ACP] = a UDP-2-N,3-O-bis[(3R)-3-hydroxyacyl]-alpha-D-glucosamine + holo-[ACP] + H(+). The protein operates within bacterial outer membrane biogenesis; LPS lipid A biosynthesis. Its function is as follows. Catalyzes the N-acylation of UDP-3-O-acylglucosamine using 3-hydroxyacyl-ACP as the acyl donor. Is involved in the biosynthesis of lipid A, a phosphorylated glycolipid that anchors the lipopolysaccharide to the outer membrane of the cell. The polypeptide is UDP-3-O-acylglucosamine N-acyltransferase (Saccharophagus degradans (strain 2-40 / ATCC 43961 / DSM 17024)).